The sequence spans 421 residues: Medium-chain specific acyl-CoA dehydrogenase, mitochondrial (421 aa).

Residues 1 to 25 (MAAAFRRGCRVLRSVSHFECRTQHS) constitute a mitochondrion transit peptide. Lys-30 and Lys-69 each carry N6-acetyllysine; alternate. An N6-succinyllysine; alternate mark is found at Lys-30 and Lys-69. N6-acetyllysine is present on Lys-79. 158 to 167 (YCVTEPSAGS) contributes to the FAD binding site. Residue Ser-167 participates in octanoyl-CoA binding. Lys-179 bears the N6-succinyllysine mark. Residue 191–193 (WIT) participates in FAD binding. At Lys-212 the chain carries N6-acetyllysine; alternate. Residue Lys-212 is modified to N6-succinyllysine; alternate. Ser-216 lines the octanoyl-CoA pocket. Lys-217, Lys-235, Lys-259, and Lys-271 each carry N6-acetyllysine; alternate. N6-succinyllysine; alternate occurs at positions 217, 235, 259, and 271. Octanoyl-CoA is bound by residues Asp-278 and Arg-281. Lys-301 bears the N6-acetyllysine mark. FAD-binding positions include 306 to 308 (RKT) and 316 to 317 (HQ). Residues Arg-349 and Thr-351 each contribute to the octanoyl-CoA site. Thr-351 carries the phosphothreonine modification. 374 to 378 (QIFGG) serves as a coordination point for FAD. An octanoyl-CoA-binding site is contributed by Glu-401. Glu-401 functions as the Proton acceptor in the catalytic mechanism. 402-405 (GTAQ) contributes to the FAD binding site.

It belongs to the acyl-CoA dehydrogenase family. As to quaternary structure, homotetramer. Interacts with the heterodimeric electron transfer flavoprotein ETF. It depends on FAD as a cofactor. Post-translationally, acetylated. Could occur at proximity of the cofactor-binding sites and reduce the catalytic activity. Could be deacetylated by SIRT3.

It is found in the mitochondrion matrix. The enzyme catalyses a medium-chain 2,3-saturated fatty acyl-CoA + oxidized [electron-transfer flavoprotein] + H(+) = a medium-chain (2E)-enoyl-CoA + reduced [electron-transfer flavoprotein]. The catalysed reaction is pentanoyl-CoA + oxidized [electron-transfer flavoprotein] + H(+) = (2E)-pentenoyl-CoA + reduced [electron-transfer flavoprotein]. It carries out the reaction hexanoyl-CoA + oxidized [electron-transfer flavoprotein] + H(+) = (2E)-hexenoyl-CoA + reduced [electron-transfer flavoprotein]. It catalyses the reaction octanoyl-CoA + oxidized [electron-transfer flavoprotein] + H(+) = (2E)-octenoyl-CoA + reduced [electron-transfer flavoprotein]. The enzyme catalyses decanoyl-CoA + oxidized [electron-transfer flavoprotein] + H(+) = (2E)-decenoyl-CoA + reduced [electron-transfer flavoprotein]. The catalysed reaction is dodecanoyl-CoA + oxidized [electron-transfer flavoprotein] + H(+) = (2E)-dodecenoyl-CoA + reduced [electron-transfer flavoprotein]. It carries out the reaction tetradecanoyl-CoA + oxidized [electron-transfer flavoprotein] + H(+) = (2E)-tetradecenoyl-CoA + reduced [electron-transfer flavoprotein]. It catalyses the reaction oxidized [electron-transfer flavoprotein] + hexadecanoyl-CoA + H(+) = (2E)-hexadecenoyl-CoA + reduced [electron-transfer flavoprotein]. The protein operates within lipid metabolism; mitochondrial fatty acid beta-oxidation. Medium-chain specific acyl-CoA dehydrogenase is one of the acyl-CoA dehydrogenases that catalyze the first step of mitochondrial fatty acid beta-oxidation, an aerobic process breaking down fatty acids into acetyl-CoA and allowing the production of energy from fats. The first step of fatty acid beta-oxidation consists in the removal of one hydrogen from C-2 and C-3 of the straight-chain fatty acyl-CoA thioester, resulting in the formation of trans-2-enoyl-CoA. Electron transfer flavoprotein (ETF) is the electron acceptor that transfers electrons to the main mitochondrial respiratory chain via ETF-ubiquinone oxidoreductase (ETF dehydrogenase). Among the different mitochondrial acyl-CoA dehydrogenases, medium-chain specific acyl-CoA dehydrogenase acts specifically on acyl-CoAs with saturated 6 to 12 carbons long primary chains. This Mus musculus (Mouse) protein is Medium-chain specific acyl-CoA dehydrogenase, mitochondrial.